The chain runs to 446 residues: Solute carrier family 52, riboflavin transporter, member 2 (446 aa).

4 helical membrane-spanning segments follow: residues 14 to 34, 47 to 67, 79 to 99, and 104 to 124; these read LLVALFGMGSWAAINGIWVEL, LPSYLSVLVALGNLGLLVVTL, APIQVVQALSVVGTALLAPLW, and VMAGQVHSVAFLALTFVLALA. N-linked (GlcNAc...) asparagine glycosylation occurs at Asn-129. The next 2 membrane-spanning stretches (helical) occupy residues 147–167 and 196–216; these read FFLGQGLSALLPCVLALGQGV and FFGALTALLVISAAAFQGLLL. Residues 228–267 are disordered; sequence GSGTGLRGGAPGVEEEEEEEASPLQEPPSQAAGNTPSPDP. Positions 229–238 are enriched in gly residues; that stretch reads SGTGLRGGAP. Positions 254-263 are enriched in polar residues; it reads PPSQAAGNTP. The next 5 membrane-spanning stretches (helical) occupy residues 278–298, 313–333, 340–360, 367–387, and 405–425; these read ACLLGLLATTSALTNGVLPAV, LAVVLGSASNPLACFLAMGIL, LGGLSLLGTLFGAYLMALAIL, VGTSAGMVLVVVLWALCLGVF, and ALLAAGVAIQVGSLLGAVTMF.

This sequence belongs to the riboflavin transporter family.

The protein resides in the cell membrane. The enzyme catalyses riboflavin(in) = riboflavin(out). Its activity is regulated as follows. Riboflavin transport is Na(+)-independent but moderately pH-sensitive. Activity is strongly inhibited by riboflavin analogs, such as lumiflavin. Weakly inhibited by flavin adenine dinucleotide (FAD) and flavin mononucleotide (FMN). Plasma membrane transporter mediating the uptake by cells of the water soluble vitamin B2/riboflavin that plays a key role in biochemical oxidation-reduction reactions of the carbohydrate, lipid, and amino acid metabolism. May also act as a receptor for 4-hydroxybutyrate. Functionally, (Microbial infection) In case of infection by porcine endogenous retrovirus (PERV-A), acts as a cell receptor to retroviral envelopes. The sequence is that of Solute carrier family 52, riboflavin transporter, member 2 (SLC52A2) from Sus scrofa (Pig).